The sequence spans 566 residues: Oxygen-dependent choline dehydrogenase (566 aa).

7-36 (DYIICGAGSAGNVLATRLTEDPNVTVLLLE) serves as a coordination point for FAD. Residues 180 to 203 (NGYQQEGFGPMDRTVTPKGRRAST) are disordered. Histidine 474 (proton acceptor) is an active-site residue.

It belongs to the GMC oxidoreductase family. The cofactor is FAD.

The catalysed reaction is choline + A = betaine aldehyde + AH2. It carries out the reaction betaine aldehyde + NAD(+) + H2O = glycine betaine + NADH + 2 H(+). The protein operates within amine and polyamine biosynthesis; betaine biosynthesis via choline pathway; betaine aldehyde from choline (cytochrome c reductase route): step 1/1. In terms of biological role, involved in the biosynthesis of the osmoprotectant glycine betaine. Catalyzes the oxidation of choline to betaine aldehyde and betaine aldehyde to glycine betaine at the same rate. This Burkholderia ambifaria (strain MC40-6) protein is Oxygen-dependent choline dehydrogenase.